Here is a 453-residue protein sequence, read N- to C-terminus: Cysteine--tRNA ligase (453 aa).

Cysteine 30 is a Zn(2+) binding site. Positions 32–42 (PTVYDRAHLGN) match the 'HIGH' region motif. Zn(2+) is bound by residues cysteine 212, histidine 237, and glutamate 241. Residues 268 to 272 (KMSKS) carry the 'KMSKS' region motif. Lysine 271 serves as a coordination point for ATP.

This sequence belongs to the class-I aminoacyl-tRNA synthetase family. As to quaternary structure, monomer. The cofactor is Zn(2+).

It localises to the cytoplasm. The catalysed reaction is tRNA(Cys) + L-cysteine + ATP = L-cysteinyl-tRNA(Cys) + AMP + diphosphate. This Jannaschia sp. (strain CCS1) protein is Cysteine--tRNA ligase.